A 305-amino-acid polypeptide reads, in one-letter code: MHYSVLLQESINDLNINPQGIYIDATFGRGGHSKAILNRLTTGRLIAFDKDLDAISYARENFQFSNFEIVHASFASIYDYCLQHSLLGKIDGIIMDLGVSSPQLDNAARGFSFTHNGPLDMRMDVSKGITASQALEELSVDDLSYIFKVYGEERFARKIALRIKDYIQQNGSISTTLELAELIRATIGKKEKKNPATRCFQALRIYVNNELKDLEALLENILAVIKSGGRIAAISFHSLEDRIVKQKFSALINPKQELNRITKMLPQDSSQIKLKWITKKSKANEDELNQNVRSRSAILRVVEKL.

S-adenosyl-L-methionine contacts are provided by residues 30 to 32, aspartate 49, phenylalanine 74, aspartate 96, and glutamine 103; that span reads GGH.

It belongs to the methyltransferase superfamily. RsmH family.

It is found in the cytoplasm. It catalyses the reaction cytidine(1402) in 16S rRNA + S-adenosyl-L-methionine = N(4)-methylcytidine(1402) in 16S rRNA + S-adenosyl-L-homocysteine + H(+). Its function is as follows. Specifically methylates the N4 position of cytidine in position 1402 (C1402) of 16S rRNA. The sequence is that of Ribosomal RNA small subunit methyltransferase H from Francisella tularensis subsp. novicida (strain U112).